An 812-amino-acid polypeptide reads, in one-letter code: Valine--tRNA ligase (812 aa).

The 'HIGH' region signature appears at 46–56 (PTVSGQLHIGH). The short motif at 536-540 (KMSKS) is the 'KMSKS' region element. Lys-539 serves as a coordination point for ATP.

Belongs to the class-I aminoacyl-tRNA synthetase family. ValS type 2 subfamily. Monomer.

The protein resides in the cytoplasm. The catalysed reaction is tRNA(Val) + L-valine + ATP = L-valyl-tRNA(Val) + AMP + diphosphate. Catalyzes the attachment of valine to tRNA(Val). As ValRS can inadvertently accommodate and process structurally similar amino acids such as threonine, to avoid such errors, it has a 'posttransfer' editing activity that hydrolyzes mischarged Thr-tRNA(Val) in a tRNA-dependent manner. The protein is Valine--tRNA ligase of Rickettsia rickettsii (strain Iowa).